A 2067-amino-acid chain; its full sequence is Negative regulator of mitosis (2067 aa).

Polar residues predominate over residues 100-118 (SLAIPQTTSQQSNRPSGSE). Disordered regions lie at residues 100–132 (SLAIPQTTSQQSNRPSGSESLDGKESRRSSTSK), 332–408 (ESIP…DDFA), and 452–480 (GSQSSTIHPGGLRQSIGAGSTRGSFGFNP). The short motif at 336-347 (SHRKKKRRDTGG) is the Nuclear localization signal element. Over residues 336–355 (SHRKKKRRDTGGTRSKRRSS) the composition is skewed to basic residues. Residues 384-396 (WNASVMSHSQYST) are compositionally biased toward polar residues. PC repeat units follow at residues 1434-1465 (AGIMGIGLLYCNSQHRRMSEVMLSEIENADQE), 1482-1520 (AAGFALGFINLGKGKDLKGMRDMHIVERLLAVAVGTKNV), 1532-1562 (GATIALAIIFMKTNDETLAQKVDIPDTTVRF), and 1625-1659 (GLCFALGLRFAGSPDPTVRDILLSYLDQFIRISRL). Residues 2020 to 2042 (FPSESDEEKRDRQETGSMPSSGH) are disordered.

It belongs to the APC1 family.

Functionally, negative regulator of mitosis in E.nidulans. This protein is part of a regulatory pathway that includes the nimA protein kinase. It is required to prevent premature entry into mitosis. Mutations to this protein both cause cells to enter mitosis and prevent them from leaving mitosis. This Emericella nidulans (strain FGSC A4 / ATCC 38163 / CBS 112.46 / NRRL 194 / M139) (Aspergillus nidulans) protein is Negative regulator of mitosis (bimE).